The primary structure comprises 101 residues: MKLLIFAVIISVVLFPVLVSSRTIKCDQLSGKCINGEEKEIMNMRLGLDVSSRRILQASRYISYEALKKNLPDNRRGEPDQRDNPYRRSCDVHSHCYRFTN.

Positions 1–21 are cleaved as a signal peptide; the sequence is MKLLIFAVIISVVLFPVLVSS. Residues 22 to 56 constitute a propeptide, removed in mature form; sequence RTIKCDQLSGKCINGEEKEIMNMRLGLDVSSRRIL. Cysteine 90 and cysteine 96 are oxidised to a cystine.

It belongs to the plant rapid alkalinization factor (RALF) family. Proteolytically cleaved, probably by S1P, a subtilisin-like serine protease (subtilase).

The protein localises to the secreted. In terms of biological role, cell signaling peptide that may regulate plant stress, growth, and development. Mediates a rapid alkalinization of extracellular space by mediating a transient increase in the cytoplasmic Ca(2+) concentration leading to a calcium-dependent signaling events through a cell surface receptor and a concomitant activation of some intracellular mitogen-activated protein kinases. The chain is Protein RALF-like 14 (RALFL14) from Arabidopsis thaliana (Mouse-ear cress).